Reading from the N-terminus, the 349-residue chain is GTP 3',8-cyclase (349 aa).

A Radical SAM core domain is found at P24–P249. Position 33 (R33) interacts with GTP. Residues C40 and C44 each coordinate [4Fe-4S] cluster. S-adenosyl-L-methionine is bound at residue Y46. C47 contributes to the [4Fe-4S] cluster binding site. R82 serves as a coordination point for GTP. Residue G86 coordinates S-adenosyl-L-methionine. GTP is bound at residue T116. An S-adenosyl-L-methionine-binding site is contributed by S140. K176 is a GTP binding site. M210 is a binding site for S-adenosyl-L-methionine. The [4Fe-4S] cluster site is built by C273 and C276. R278 to R280 serves as a coordination point for GTP. C290 provides a ligand contact to [4Fe-4S] cluster.

It belongs to the radical SAM superfamily. MoaA family. In terms of assembly, monomer and homodimer. The cofactor is [4Fe-4S] cluster.

The enzyme catalyses GTP + AH2 + S-adenosyl-L-methionine = (8S)-3',8-cyclo-7,8-dihydroguanosine 5'-triphosphate + 5'-deoxyadenosine + L-methionine + A + H(+). It functions in the pathway cofactor biosynthesis; molybdopterin biosynthesis. Catalyzes the cyclization of GTP to (8S)-3',8-cyclo-7,8-dihydroguanosine 5'-triphosphate. The polypeptide is GTP 3',8-cyclase (Sinorhizobium medicae (strain WSM419) (Ensifer medicae)).